Reading from the N-terminus, the 336-residue chain is uncharacterized protein (336 aa).

Position 29 to 36 (glycine 29 to serine 36) interacts with ATP.

It belongs to the archaeal ATPase family.

This is an uncharacterized protein from Methanocaldococcus jannaschii (strain ATCC 43067 / DSM 2661 / JAL-1 / JCM 10045 / NBRC 100440) (Methanococcus jannaschii).